The chain runs to 311 residues: HPr kinase/phosphorylase (311 aa).

Residues His136 and Lys157 contribute to the active site. 151-158 serves as a coordination point for ATP; sequence GDSGIGKS. Residue Ser158 participates in Mg(2+) binding. Asp175 acts as the Proton acceptor; for phosphorylation activity. Proton donor; for dephosphorylation activity in catalysis. Residues 199–208 form an important for the catalytic mechanism of both phosphorylation and dephosphorylation region; that stretch reads LEIRGLGIIN. A Mg(2+)-binding site is contributed by Glu200. Residue Arg241 is part of the active site. The tract at residues 262–267 is important for the catalytic mechanism of dephosphorylation; sequence PVRPGR.

It belongs to the HPrK/P family. Homohexamer. Mg(2+) is required as a cofactor.

The enzyme catalyses [HPr protein]-L-serine + ATP = [HPr protein]-O-phospho-L-serine + ADP + H(+). The catalysed reaction is [HPr protein]-O-phospho-L-serine + phosphate + H(+) = [HPr protein]-L-serine + diphosphate. In terms of biological role, catalyzes the ATP- as well as the pyrophosphate-dependent phosphorylation of a specific serine residue in HPr, a phosphocarrier protein of the phosphoenolpyruvate-dependent sugar phosphotransferase system (PTS). HprK/P also catalyzes the pyrophosphate-producing, inorganic phosphate-dependent dephosphorylation (phosphorolysis) of seryl-phosphorylated HPr (P-Ser-HPr). The two antagonistic activities of HprK/P are regulated by several intracellular metabolites, which change their concentration in response to the absence or presence of rapidly metabolisable carbon sources (glucose, fructose, etc.) in the growth medium. Therefore, by controlling the phosphorylation state of HPr, HPrK/P is a sensor enzyme that plays a major role in the regulation of carbon metabolism and sugar transport: it mediates carbon catabolite repression (CCR), and regulates PTS-catalyzed carbohydrate uptake and inducer exclusion. The chain is HPr kinase/phosphorylase from Staphylococcus haemolyticus (strain JCSC1435).